A 2148-amino-acid chain; its full sequence is Polyketide synthase 1 (2148 aa).

The N-terminal acylcarrier protein transacylase domain (SAT) stretch occupies residues 19–261; sequence FIFGDQSSCN…TPLAVHAPYH (243 aa). Residues 394-829 form the Ketosynthase family 3 (KS3) domain; that stretch reads ESKIAIIGMS…GGNTALLVED (436 aa). Catalysis depends on for beta-ketoacyl synthase activity residues cysteine 566, histidine 701, and histidine 745. Positions 929–1233 are malonyl-CoA:ACP transacylase (MAT) domain; sequence AFVFSGQGSQ…PSLMRNKDGW (305 aa). Catalysis depends on serine 1018, which acts as the For acyl/malonyl transferase activity. Residues 1310–1624 form a product template (PT) domain region; the sequence is TASVHRIVHE…RKVLNTAMPP (315 aa). Positions 1314 to 1447 are N-terminal hotdog fold; it reads HRIVHESVEK…SSLHFEQPKV (134 aa). The PKS/mFAS DH domain maps to 1314–1619; that stretch reads HRIVHESVEK…FQGIPRKVLN (306 aa). Histidine 1346 functions as the Proton acceptor; for dehydratase activity in the catalytic mechanism. The interval 1474–1619 is C-terminal hotdog fold; it reads LNSRMSSGVI…FQGIPRKVLN (146 aa). Residue aspartate 1533 is the Proton donor; for dehydratase activity of the active site. The interval 1619–1655 is disordered; sequence NTAMPPPKSQNEAPVRSGPAKPAVKPPRSASSEHSGH. A Carrier 1 domain is found at 1678–1752; the sequence is RNPMLPVFKI…DLAAHLGMDT (75 aa). Position 1712 is an O-(pantetheine 4'-phosphoryl)serine (serine 1712). The segment covering 1755–1790 has biased composition (low complexity); it reads ADQSSGQSSSSGGLSPRSDSIGEMTSSATTPPSMSP. Residues 1755-1796 are disordered; that stretch reads ADQSSGQSSSSGGLSPRSDSIGEMTSSATTPPSMSPRGSVSG. One can recognise a Carrier 2 domain in the interval 1793 to 1870; sequence SVSGSQCKDV…SFKHMFQQGH (78 aa). The residue at position 1830 (serine 1830) is an O-(pantetheine 4'-phosphoryl)serine. Residues 1882-2146 form a thioesterase (TE) domain region; the sequence is LKQYRATSTL…ERVAAFIRSI (265 aa). Serine 1973 functions as the For thioesterase activity in the catalytic mechanism.

Polyketide synthase; part of the Pks1 gene cluster that mediates the biosynthesis of an anthraquinone derivative pigment that contributes to conidial pigmentation that provides protection from UV radiation, heat and cold stress. The polyketide synthase Pks1 produces 1-acetyl-2,4,6,8-tetrahydroxy-9,10-anthraquinone though condensation of acetyl-CoA with malonyl-CoA. The dehydratase EthD and the laccase Mlac1 further convert the anthraquinone derivative into the final conidial pigment. The protein is Polyketide synthase 1 of Metarhizium brunneum (strain ARSEF 3297).